Reading from the N-terminus, the 336-residue chain is Fimbrial adhesin PapGII (336 aa).

The N-terminal stretch at 1 to 20 (MKKWFPALLFSLCVSGESSA) is a signal peptide. 2 disulfides stabilise this stretch: Cys64–Cys138 and Cys217–Cys249. D-galactose contacts are provided by residues Glu79 and 124-127 (GYKW).

Belongs to the adhesin PapG family.

It localises to the secreted. The protein localises to the fimbrium. Its function is as follows. Tip adhesin component of type P pili that plays a critical role in kidney infection through targeted interaction with the globoseries glycolipids containing the Gal-alpha(1-4)-Gal disaccharide present on uroepithelial cells. In turn, transcriptionally regulates host gene expression in kidney cells, leading to inflammatory pathway activation and renal tissue damage. Acts thereby as key determinant of invasive uropathogenic E.coli (UPEC), which cause pyelonephritis and urinary-source bacteremia. The polypeptide is Fimbrial adhesin PapGII (Escherichia coli).